A 156-amino-acid polypeptide reads, in one-letter code: Crossover junction endodeoxyribonuclease RuvC (156 aa).

Catalysis depends on residues Asp-9, Glu-69, and Asp-141. Mg(2+) contacts are provided by Asp-9, Glu-69, and Asp-141.

The protein belongs to the RuvC family. Homodimer which binds Holliday junction (HJ) DNA. The HJ becomes 2-fold symmetrical on binding to RuvC with unstacked arms; it has a different conformation from HJ DNA in complex with RuvA. In the full resolvosome a probable DNA-RuvA(4)-RuvB(12)-RuvC(2) complex forms which resolves the HJ. The cofactor is Mg(2+).

The protein localises to the cytoplasm. It catalyses the reaction Endonucleolytic cleavage at a junction such as a reciprocal single-stranded crossover between two homologous DNA duplexes (Holliday junction).. Its function is as follows. The RuvA-RuvB-RuvC complex processes Holliday junction (HJ) DNA during genetic recombination and DNA repair. Endonuclease that resolves HJ intermediates. Cleaves cruciform DNA by making single-stranded nicks across the HJ at symmetrical positions within the homologous arms, yielding a 5'-phosphate and a 3'-hydroxyl group; requires a central core of homology in the junction. The consensus cleavage sequence is 5'-(A/T)TT(C/G)-3'. Cleavage occurs on the 3'-side of the TT dinucleotide at the point of strand exchange. HJ branch migration catalyzed by RuvA-RuvB allows RuvC to scan DNA until it finds its consensus sequence, where it cleaves and resolves the cruciform DNA. The sequence is that of Crossover junction endodeoxyribonuclease RuvC from Acaryochloris marina (strain MBIC 11017).